The following is a 329-amino-acid chain: Ubiquitin carboxyl-terminal hydrolase isozyme L5 (329 aa).

One can recognise a UCH catalytic domain in the interval 7 to 225 (EWCLMESDPG…IRFNLMAIVS (219 aa)). Lysine 47 is subject to N6-succinyllysine. Cysteine 88 functions as the Nucleophile in the catalytic mechanism. Lysine 158 is subject to N6-acetyllysine. Histidine 164 acts as the Proton donor in catalysis. Lysine 289 bears the N6-succinyllysine mark. The ULD domain occupies 291–319 (NYLPFIMELLKTLAEHQQLIPLVEKAKEK). Residues 313–329 (VEKAKEKQNAKKAQETK) are interaction with ADRM1.

This sequence belongs to the peptidase C12 family. Component of the 19S (PA700) regulatory complex of the 26S proteasome. Interacts with ADRM1 and NFRKB; in vitro ADRM1 and NFRKB compete for interaction with UCHL5. Component of the INO80 complex; specifically part of a complex module associated with N-terminus of INO80.

Its subcellular location is the cytoplasm. The protein localises to the nucleus. It catalyses the reaction Thiol-dependent hydrolysis of ester, thioester, amide, peptide and isopeptide bonds formed by the C-terminal Gly of ubiquitin (a 76-residue protein attached to proteins as an intracellular targeting signal).. Activated by ADRM1. Inhibited by interaction with NFRKB. Protease that specifically cleaves 'Lys-48'-linked polyubiquitin chains. Deubiquitinating enzyme associated with the 19S regulatory subunit of the 26S proteasome. Putative regulatory component of the INO80 complex; however is inactive in the INO80 complex and is activated by a transient interaction of the INO80 complex with the proteasome via ADRM1. The protein is Ubiquitin carboxyl-terminal hydrolase isozyme L5 (UCHL5) of Homo sapiens (Human).